The primary structure comprises 123 residues: Small ribosomal subunit protein uS13 (123 aa).

Residues 94–123 (GLPVRGQSTKSNARTRKGPRKTVAGKKSTK) are disordered. A compositionally biased stretch (basic residues) spans 106 to 123 (ARTRKGPRKTVAGKKSTK).

This sequence belongs to the universal ribosomal protein uS13 family. Part of the 30S ribosomal subunit. Forms a loose heterodimer with protein S19. Forms two bridges to the 50S subunit in the 70S ribosome.

Functionally, located at the top of the head of the 30S subunit, it contacts several helices of the 16S rRNA. In the 70S ribosome it contacts the 23S rRNA (bridge B1a) and protein L5 of the 50S subunit (bridge B1b), connecting the 2 subunits; these bridges are implicated in subunit movement. Contacts the tRNAs in the A and P-sites. The protein is Small ribosomal subunit protein uS13 of Mycoplasmopsis agalactiae (strain NCTC 10123 / CIP 59.7 / PG2) (Mycoplasma agalactiae).